Here is a 377-residue protein sequence, read N- to C-terminus: TraB domain-containing protein (377 aa).

At Met1 the chain carries N-acetylmethionine. The interval 1–34 (MEEPEEQPPHEADTEPVVTSGASEAVPRVLPGDP) is disordered. Residue Thr65 is modified to Phosphothreonine.

This is TraB domain-containing protein (TRABD) from Bos taurus (Bovine).